The primary structure comprises 304 residues: Fluoroacetate dehalogenase (304 aa).

Residues 26-151 (PALLLLHGFP…FVARAYWHWY (126 aa)) enclose the AB hydrolase-1 domain. D104 acts as the Nucleophile in catalysis. Fluoroacetate is bound by residues R105, R108, H149, W150, and Y212. Residue H271 is the Proton acceptor of the active site.

The protein belongs to the AB hydrolase superfamily. Epoxide hydrolase family. As to quaternary structure, homodimer.

The catalysed reaction is a haloacetate + H2O = a halide anion + glycolate + H(+). It carries out the reaction fluoroacetate + H2O = fluoride + glycolate + H(+). Its function is as follows. Catalyzes the hydrolytic defluorination of fluoroacetate to produce glycolate. Has only very low activity towards chloroacetate and bromoacetate. In Burkholderia sp, this protein is Fluoroacetate dehalogenase (fac-dex).